Here is a 570-residue protein sequence, read N- to C-terminus: Sulfite reductase [NADPH] hemoprotein beta-component (570 aa).

Residues Cys434, Cys440, Cys479, and Cys483 each contribute to the [4Fe-4S] cluster site. Position 483 (Cys483) interacts with siroheme.

Belongs to the nitrite and sulfite reductase 4Fe-4S domain family. In terms of assembly, alpha(8)-beta(8). The alpha component is a flavoprotein, the beta component is a hemoprotein. Siroheme serves as cofactor. [4Fe-4S] cluster is required as a cofactor.

The catalysed reaction is hydrogen sulfide + 3 NADP(+) + 3 H2O = sulfite + 3 NADPH + 4 H(+). It participates in sulfur metabolism; hydrogen sulfide biosynthesis; hydrogen sulfide from sulfite (NADPH route): step 1/1. Functionally, component of the sulfite reductase complex that catalyzes the 6-electron reduction of sulfite to sulfide. This is one of several activities required for the biosynthesis of L-cysteine from sulfate. In Salmonella paratyphi B (strain ATCC BAA-1250 / SPB7), this protein is Sulfite reductase [NADPH] hemoprotein beta-component.